A 244-amino-acid polypeptide reads, in one-letter code: MSDSSDTTVDGASDGASDGASGADNRAQLVDTALTERQRTILNVIRTSVNDRGYPPSIREIGDAVGLTSTSSVAHQLRTLERKGYLRRDPNRPRAVDVRGADDTVTAAPVTDVAGSDALPEPTFVPVLGRIAAGGPILAEEAVEDVFPLPRELVGQGTLFLLKVVGESMIEAAICDGDWVVVRQQNVADNGDIVAAMIDGEATVKTFKRAGGQIWLMPHNPAFDPIPGNDATVLGKVVTVIRKI.

The interval 1–24 (MSDSSDTTVDGASDGASDGASGAD) is disordered. The segment covering 10-24 (DGASDGASDGASGAD) has biased composition (low complexity). The H-T-H motif DNA-binding region spans 58–78 (IREIGDAVGLTSTSSVAHQLR). Active-site for autocatalytic cleavage activity residues include S168 and K205.

This sequence belongs to the peptidase S24 family. As to quaternary structure, homodimer.

It carries out the reaction Hydrolysis of Ala-|-Gly bond in repressor LexA.. Represses a number of genes involved in the response to DNA damage (SOS response), including recA and lexA. In the presence of single-stranded DNA, RecA interacts with LexA causing an autocatalytic cleavage which disrupts the DNA-binding part of LexA, leading to derepression of the SOS regulon and eventually DNA repair. In Mycobacterium marinum (strain ATCC BAA-535 / M), this protein is LexA repressor.